The primary structure comprises 267 residues: Tryptophan synthase alpha chain (267 aa).

Residues E47 and D58 each act as proton acceptor in the active site.

This sequence belongs to the TrpA family. Tetramer of two alpha and two beta chains.

The catalysed reaction is (1S,2R)-1-C-(indol-3-yl)glycerol 3-phosphate + L-serine = D-glyceraldehyde 3-phosphate + L-tryptophan + H2O. The protein operates within amino-acid biosynthesis; L-tryptophan biosynthesis; L-tryptophan from chorismate: step 5/5. In terms of biological role, the alpha subunit is responsible for the aldol cleavage of indoleglycerol phosphate to indole and glyceraldehyde 3-phosphate. The sequence is that of Tryptophan synthase alpha chain from Chlorobium limicola (strain DSM 245 / NBRC 103803 / 6330).